The chain runs to 2065 residues: Cytoskeleton-associated protein 5-A (2065 aa).

TOG stretches follow at residues 1–240 (MGDD…DLKA) and 264–515 (VDAY…KETK). 7 HEAT repeats span residues 120–157 (EKAEVVQEELLKGLDNKNPKIVVACVETVRKALSEFGS), 160–197 (MTLKPIIKVLPKLFESREKAIRDEAKLLAVEIYRWIRD), 270–311 (LEAV…NPKI), 314–352 (GDFADLVKALKTVVGKDTNVMLVALAAKCIAGLAAGLRK), 356–393 (SYAGHIVPTILEKFKEKKPQVVQALQEAIDAVFLTTTL), 395–432 (NISEDVLAVMDNKNPAIKQQTSLFLARSFRHCTPSTLP), and 436–477 (LKPF…VNPF). The segment at 500–574 (NGKKGGAAAG…GATAKGKKAV (75 aa)) is disordered. Residues 538–568 (KAAAAPKKAPAAKPGGPVKKAKAPASSGATA) show a composition bias toward low complexity. Residues 644–808 (KPGFKETNFQ…LSQIDAEFEK (165 aa)) are TOG 3. 2 HEAT repeats span residues 652–689 (FQVMQMKLHIVALIAQKGNFSKTSACAVLDGLVDKVGD) and 748–785 (INVKAFISNVKTALAATNPAIRTSAITLLGVMYLYMGA). The interval 809–849 (MKGQTPPVSIRGSKHGSGRDEGEEGEEQDEDAPADVTDLLP) is disordered. Residues 829–841 (EGEEGEEQDEDAP) are compositionally biased toward acidic residues. Residues 846–1090 (DLLPRTDISD…AGPPGKASSK (245 aa)) form a TOG 4 region. HEAT repeat units lie at residues 852 to 889 (DISDKISSDLVSKIEDKNWKIRKEGLDEVTAIINEAKF), 892 to 929 (PSIGELPSALKGRLNDSNKILVQQTLTILQQLSTAMGH), 933 to 970 (QHVKNLGMPIITVLGDSKANVRAAALGTLKSWVDQTGM), and 1015 to 1052 (CVPYLYNCLEDRNGDVRKKAQEALPIFMMHIGFEKMSK). The span at 1074-1115 (ASMPAKPAGPPGKASSKQPPAVAQASASPPPAASSDSGSSTS) shows a compositional bias: low complexity. Positions 1074-1192 (ASMPAKPAGP…AKDEEDKSGP (119 aa)) are disordered. A compositionally biased stretch (polar residues) spans 1126-1163 (PGTQASKAKTQSVSSEGNTSLNPSNTSLTPSKANTSLS). Positions 1150–1235 (NTSLTPSKAN…IEQLKTQMSP (86 aa)) are interaction with microtubule lattice. The TOG 5 stretch occupies residues 1191 to 1460 (GPIYIIVPNG…ERIKRAGKKQ (270 aa)). HEAT repeat units follow at residues 1251 to 1288 (QRQIKGLAVMTEHLESEKEGVISCLDLVLKWFTLRFFD), 1295 to 1318 (MKCLEYLKLLFIMLSQEEYHLTEM), 1319 to 1355 (EGTSFLPYLMLKVGEPKDIVRKDVRAILTKMCQVYPA), 1357 to 1390 (KMFNFVMEGTKSKNSKQRAECLEELGCLVESYGM), and 1395 to 1432 (PTPAKALKEIAIHIGDRDTTVRNAALNTIVTVYNVHGE). 2 disordered regions span residues 1982-2001 (DNAKQDERPPLTSLLSKSSA) and 2028-2065 (VELDSNQTYPSTTTSSSASSTNIDDLKKRLERIKSSRK). The segment at 2002 to 2065 (PAVVSSTDML…RLERIKSSRK (64 aa)) is interaction with tacc3. Low complexity predominate over residues 2038–2048 (STTTSSSASST). The segment covering 2051–2065 (DDLKKRLERIKSSRK) has biased composition (basic and acidic residues).

The protein belongs to the TOG/XMAP215 family. As to quaternary structure, interacts with tacc3; two molecules of ckap5 interact with 1 molecule of tacc3 probably mediated by coiled coil domains forming a four-helix bundle. Interacts with tacc3 and clathrin forming the TACC3/ch-TOG/clathrin complex located at spindle inter-microtubules bridges. Interacts with ndc80; indicative for an association with the NDC80 comnplex.

Its subcellular location is the cytoplasm. The protein localises to the cytoskeleton. It localises to the spindle pole. It is found in the spindle. The protein resides in the microtubule organizing center. Its subcellular location is the centrosome. The protein localises to the chromosome. It localises to the centromere. It is found in the kinetochore. Binds to the plus end of microtubules and regulates microtubule dynamics and microtubule organization. Acts as a processive microtubule polymerase. Promotes cytoplasmic microtubule nucleation and elongation. Plays a major role in organizing spindle poles. In spindle formation protects kinetochore microtubules from depolymerization by kif2c and has an essential role in centrosomal microtubule assembly independently of kif2c activity. Contributes to centrosome integrity. Acts as a component of the TACC3/ch-TOG/clathrin complex proposed to contribute to stabilization of kinetochore fibers of the mitotic spindle by acting as inter-microtubule bridge. Enhances the strength of NDC80 complex-mediated kinetochore-tip microtubule attachments. The polypeptide is Cytoskeleton-associated protein 5-A (ckap5-a) (Xenopus laevis (African clawed frog)).